A 356-amino-acid chain; its full sequence is Protein RecA (356 aa).

67-74 lines the ATP pocket; sequence GPESSGKT.

The protein belongs to the RecA family.

It is found in the cytoplasm. In terms of biological role, can catalyze the hydrolysis of ATP in the presence of single-stranded DNA, the ATP-dependent uptake of single-stranded DNA by duplex DNA, and the ATP-dependent hybridization of homologous single-stranded DNAs. It interacts with LexA causing its activation and leading to its autocatalytic cleavage. This chain is Protein RecA, found in Yersinia pestis (strain Pestoides F).